Here is a 681-residue protein sequence, read N- to C-terminus: Potassium-transporting ATPase ATP-binding subunit (681 aa).

The next 4 membrane-spanning stretches (helical) occupy residues 30-50 (LLVY…FFGI), 59-79 (LAIA…EAIA), 216-236 (ILLV…LPFT), and 255-275 (IALL…SIGI). The 4-aspartylphosphate intermediate role is filled by Asp-306. ATP contacts are provided by residues Asp-343, Glu-347, 376–383 (FTATTRMS), and Lys-394. Asp-517 and Asp-521 together coordinate Mg(2+). 3 helical membrane-spanning segments follow: residues 587–607 (FAII…LNLM), 615–635 (AILS…PLSL), and 661–681 (LIAP…LGIV).

The protein belongs to the cation transport ATPase (P-type) (TC 3.A.3) family. Type IA subfamily. In terms of assembly, the system is composed of three essential subunits: KdpA, KdpB and KdpC.

The protein resides in the cell membrane. The enzyme catalyses K(+)(out) + ATP + H2O = K(+)(in) + ADP + phosphate + H(+). Part of the high-affinity ATP-driven potassium transport (or Kdp) system, which catalyzes the hydrolysis of ATP coupled with the electrogenic transport of potassium into the cytoplasm. This subunit is responsible for energy coupling to the transport system and for the release of the potassium ions to the cytoplasm. The sequence is that of Potassium-transporting ATPase ATP-binding subunit from Listeria monocytogenes serotype 4a (strain HCC23).